A 477-amino-acid polypeptide reads, in one-letter code: Bifunctional protein HldE (477 aa).

The interval 1–320 is ribokinase; sequence MKDSLPAFEK…SLSDTHHSET (320 aa). 195 to 198 contacts ATP; it reads NLHE. The active site involves Asp-264. Residues 346 to 477 form a cytidylyltransferase region; it reads MTNGCFDILH…KIIENIMANQ (132 aa).

It in the N-terminal section; belongs to the carbohydrate kinase PfkB family. This sequence in the C-terminal section; belongs to the cytidylyltransferase family. As to quaternary structure, homodimer.

It catalyses the reaction D-glycero-beta-D-manno-heptose 7-phosphate + ATP = D-glycero-beta-D-manno-heptose 1,7-bisphosphate + ADP + H(+). The catalysed reaction is D-glycero-beta-D-manno-heptose 1-phosphate + ATP + H(+) = ADP-D-glycero-beta-D-manno-heptose + diphosphate. It participates in nucleotide-sugar biosynthesis; ADP-L-glycero-beta-D-manno-heptose biosynthesis; ADP-L-glycero-beta-D-manno-heptose from D-glycero-beta-D-manno-heptose 7-phosphate: step 1/4. Its pathway is nucleotide-sugar biosynthesis; ADP-L-glycero-beta-D-manno-heptose biosynthesis; ADP-L-glycero-beta-D-manno-heptose from D-glycero-beta-D-manno-heptose 7-phosphate: step 3/4. In terms of biological role, catalyzes the phosphorylation of D-glycero-D-manno-heptose 7-phosphate at the C-1 position to selectively form D-glycero-beta-D-manno-heptose-1,7-bisphosphate. Functionally, catalyzes the ADP transfer from ATP to D-glycero-beta-D-manno-heptose 1-phosphate, yielding ADP-D-glycero-beta-D-manno-heptose. The chain is Bifunctional protein HldE from Shewanella piezotolerans (strain WP3 / JCM 13877).